Reading from the N-terminus, the 203-residue chain is ATP-dependent Clp protease proteolytic subunit 2 (203 aa).

The active-site Nucleophile is S100. H125 is a catalytic residue.

Belongs to the peptidase S14 family. As to quaternary structure, fourteen ClpP subunits assemble into 2 heptameric rings which stack back to back to give a disk-like structure with a central cavity, resembling the structure of eukaryotic proteasomes.

Its subcellular location is the cytoplasm. The catalysed reaction is Hydrolysis of proteins to small peptides in the presence of ATP and magnesium. alpha-casein is the usual test substrate. In the absence of ATP, only oligopeptides shorter than five residues are hydrolyzed (such as succinyl-Leu-Tyr-|-NHMec, and Leu-Tyr-Leu-|-Tyr-Trp, in which cleavage of the -Tyr-|-Leu- and -Tyr-|-Trp bonds also occurs).. Cleaves peptides in various proteins in a process that requires ATP hydrolysis. Has a chymotrypsin-like activity. Plays a major role in the degradation of misfolded proteins. The protein is ATP-dependent Clp protease proteolytic subunit 2 of Thermobifida fusca (strain YX).